The following is a 686-amino-acid chain: DNA ligase (686 aa).

Residues 34–38, 83–84, and E120 contribute to the NAD(+) site; these read DAEYD and SI. Residue K122 is the N6-AMP-lysine intermediate of the active site. Positions 143, 180, 298, and 322 each coordinate NAD(+). The Zn(2+) site is built by C420, C423, C438, and C444. The BRCT domain occupies 603–686; that stretch reads QSGGILSGKT…ALLGSNKKNG (84 aa).

Belongs to the NAD-dependent DNA ligase family. LigA subfamily. Mg(2+) is required as a cofactor. It depends on Mn(2+) as a cofactor.

It carries out the reaction NAD(+) + (deoxyribonucleotide)n-3'-hydroxyl + 5'-phospho-(deoxyribonucleotide)m = (deoxyribonucleotide)n+m + AMP + beta-nicotinamide D-nucleotide.. Functionally, DNA ligase that catalyzes the formation of phosphodiester linkages between 5'-phosphoryl and 3'-hydroxyl groups in double-stranded DNA using NAD as a coenzyme and as the energy source for the reaction. It is essential for DNA replication and repair of damaged DNA. The protein is DNA ligase of Thiobacillus denitrificans (strain ATCC 25259 / T1).